Here is a 365-residue protein sequence, read N- to C-terminus: UDP-N-acetylglucosamine--N-acetylmuramyl-(pentapeptide) pyrophosphoryl-undecaprenol N-acetylglucosamine transferase (365 aa).

UDP-N-acetyl-alpha-D-glucosamine-binding positions include 17–19 (TGG), Asn129, Arg167, Ser194, Ile250, 269–274 (ALTVSE), and Gln295.

This sequence belongs to the glycosyltransferase 28 family. MurG subfamily.

It is found in the cell inner membrane. It carries out the reaction di-trans,octa-cis-undecaprenyl diphospho-N-acetyl-alpha-D-muramoyl-L-alanyl-D-glutamyl-meso-2,6-diaminopimeloyl-D-alanyl-D-alanine + UDP-N-acetyl-alpha-D-glucosamine = di-trans,octa-cis-undecaprenyl diphospho-[N-acetyl-alpha-D-glucosaminyl-(1-&gt;4)]-N-acetyl-alpha-D-muramoyl-L-alanyl-D-glutamyl-meso-2,6-diaminopimeloyl-D-alanyl-D-alanine + UDP + H(+). Its pathway is cell wall biogenesis; peptidoglycan biosynthesis. Its function is as follows. Cell wall formation. Catalyzes the transfer of a GlcNAc subunit on undecaprenyl-pyrophosphoryl-MurNAc-pentapeptide (lipid intermediate I) to form undecaprenyl-pyrophosphoryl-MurNAc-(pentapeptide)GlcNAc (lipid intermediate II). The protein is UDP-N-acetylglucosamine--N-acetylmuramyl-(pentapeptide) pyrophosphoryl-undecaprenol N-acetylglucosamine transferase of Shewanella halifaxensis (strain HAW-EB4).